The primary structure comprises 128 residues: MASRLLRGVGALAAQALRRTARGAAVTRSMASGGGVPTDEEQATGLEREIMIAAQKGLDPYNMLPPKAASGTKEDPNLVPSISNKRIVGCICEEDNCTVIWFWLHKGESQRCPNCGTHYKLVPHQMAH.

The N-terminal 30 residues, 1-30 (MASRLLRGVGALAAQALRRTARGAAVTRSM), are a transit peptide targeting the mitochondrion. Residues lysine 67 and lysine 85 each carry the N6-acetyllysine modification. Cysteine 90, cysteine 92, cysteine 112, and cysteine 115 together coordinate Zn(2+). Lysine 120 is modified (N6-acetyllysine).

Belongs to the cytochrome c oxidase subunit 5B family. In terms of assembly, component of the cytochrome c oxidase (complex IV, CIV), a multisubunit enzyme composed of 14 subunits. The complex is composed of a catalytic core of 3 subunits MT-CO1, MT-CO2 and MT-CO3, encoded in the mitochondrial DNA, and 11 supernumerary subunits COX4I, COX5A, COX5B, COX6A, COX6B, COX6C, COX7A, COX7B, COX7C, COX8 and NDUFA4, which are encoded in the nuclear genome. The complex exists as a monomer or a dimer and forms supercomplexes (SCs) in the inner mitochondrial membrane with NADH-ubiquinone oxidoreductase (complex I, CI) and ubiquinol-cytochrome c oxidoreductase (cytochrome b-c1 complex, complex III, CIII), resulting in different assemblies (supercomplex SCI(1)III(2)IV(1) and megacomplex MCI(2)III(2)IV(2)).

The protein resides in the mitochondrion inner membrane. The protein operates within energy metabolism; oxidative phosphorylation. Functionally, component of the cytochrome c oxidase, the last enzyme in the mitochondrial electron transport chain which drives oxidative phosphorylation. The respiratory chain contains 3 multisubunit complexes succinate dehydrogenase (complex II, CII), ubiquinol-cytochrome c oxidoreductase (cytochrome b-c1 complex, complex III, CIII) and cytochrome c oxidase (complex IV, CIV), that cooperate to transfer electrons derived from NADH and succinate to molecular oxygen, creating an electrochemical gradient over the inner membrane that drives transmembrane transport and the ATP synthase. Cytochrome c oxidase is the component of the respiratory chain that catalyzes the reduction of oxygen to water. Electrons originating from reduced cytochrome c in the intermembrane space (IMS) are transferred via the dinuclear copper A center (CU(A)) of subunit 2 and heme A of subunit 1 to the active site in subunit 1, a binuclear center (BNC) formed by heme A3 and copper B (CU(B)). The BNC reduces molecular oxygen to 2 water molecules using 4 electrons from cytochrome c in the IMS and 4 protons from the mitochondrial matrix. The protein is Cytochrome c oxidase subunit 5B, mitochondrial (Cox5b) of Mus musculus (Mouse).